A 283-amino-acid chain; its full sequence is Peflin (283 aa).

A run of 8 repeats spans residues 21–30, 36–44, 45–54, 55–62, 71–79, 80–87, 88–95, and 96–104. The 8 X 9 AA approximate tandem repeat of [AP]-P-G-G-P-Y-G-G-P-P stretch occupies residues 21 to 104; that stretch reads PQTNYYGGQQ…SQQHGSYGQG (84 aa). Residues 37–70 are compositionally biased toward low complexity; the sequence is PAASYGRPAPGAPYGSPPSGGVYGHPVPGSAAPG. The disordered stretch occupies residues 37 to 113; it reads PAASYGRPAP…GAPAGNIPPG (77 aa). Over residues 71-81 the composition is skewed to gly residues; the sequence is APGGPYGGQAP. Positions 93–104 are enriched in low complexity; it reads YGSQQHGSYGQG. EF-hand domains follow at residues 113-148, 154-179, 180-215, 216-252, and 253-282; these read GVDP…TNWS, TCTM…SALW, RFIQ…MGYQ, LSPQ…LQSM, and TEAF…TTRL. Ca(2+)-binding residues include D126, D128, S130, Y132, and E137. D193, D195, S197, S199, and E204 together coordinate Ca(2+).

In terms of assembly, heterodimer; heterodimerizes (via the EF-hand 5) with pdcd6.

The protein localises to the cytoplasm. It is found in the endoplasmic reticulum. It localises to the membrane. Its subcellular location is the cytoplasmic vesicle. The protein resides in the COPII-coated vesicle membrane. Its function is as follows. Calcium-binding protein that acts as an adapter that bridges unrelated proteins or stabilizes weak protein-protein complexes in response to calcium. Acts as a negative regulator of ER-Golgi transport. The protein is Peflin of Xenopus laevis (African clawed frog).